Reading from the N-terminus, the 206-residue chain is Synaptosomal-associated protein 25 (206 aa).

Over residues Met-1–Gln-20 the composition is skewed to basic and acidic residues. A disordered region spans residues Met-1–Asp-23. Residues Asp-19–Leu-81 form the t-SNARE coiled-coil homology 1 domain. S-palmitoyl cysteine attachment occurs at residues Cys-85, Cys-88, Cys-90, and Cys-92. Residue Thr-138 is modified to Phosphothreonine. Residues Asp-140–Met-202 enclose the t-SNARE coiled-coil homology 2 domain. Residue Ser-187 is modified to Phosphoserine.

The protein belongs to the SNAP-25 family. As to quaternary structure, part of the SNARE core complex containing SNAP25, VAMP2 and STX1A. This complex binds CPLX1. Interacts with TRIM9, RIMS1 and SNAPIN. Binds STXBP6. Found in a ternary complex with STX1A and VAMP8. Associates with the BLOC-1 complex. Isoform 1 and isoform 2 interact with BLOC1S6. Interacts with alpha-synuclein/SNCA. Palmitoylated. Cys-85 appears to be the main site, and palmitoylation is required for membrane association.

It localises to the membrane. The protein localises to the synapse. It is found in the synaptosome. The protein resides in the cell membrane. Functionally, t-SNARE involved in the molecular regulation of neurotransmitter release. May play an important role in the synaptic function of specific neuronal systems. Associates with proteins involved in vesicle docking and membrane fusion. The chain is Synaptosomal-associated protein 25 (SNAP25) from Gallus gallus (Chicken).